Consider the following 242-residue polypeptide: Universal stress protein PHOS32 (242 aa).

The N-terminal 43 residues, 1–43, are a transit peptide targeting the chloroplast; sequence MNPADSDHPQLPNIKIHHPPSPRHSHHHHSSSTPSSAATPTPT. The segment at 1–45 is disordered; the sequence is MNPADSDHPQLPNIKIHHPPSPRHSHHHHSSSTPSSAATPTPTAG. Residues 15–30 show a composition bias toward basic residues; that stretch reads KIHHPPSPRHSHHHHS. ATP is bound at residue Pro19. At Ser21 the chain carries Phosphoserine; by MAPK3 and MAPK6. The segment covering 31 to 44 has biased composition (low complexity); sequence SSTPSSAATPTPTA. Residues Val83, 168-178, and 186-188 each bind ATP; these read GSRGFGAEKKR and SVS. Phosphoserine is present on Ser219.

It belongs to the universal stress protein A family. In terms of processing, phosphorylated by MAPK3 and MAPK6 after pathogenic elicitation (e.g. bacterial flg22, Phytophthora infestans zoospores and xylanase).

Its subcellular location is the plastid. It is found in the chloroplast. This Arabidopsis thaliana (Mouse-ear cress) protein is Universal stress protein PHOS32.